A 93-amino-acid chain; its full sequence is Mammaglobin-A (93 aa).

Positions 1–18 are cleaved as a signal peptide; the sequence is MKLLMVLMLAALSQHCYA. N-linked (GlcNAc...) asparagine glycans are attached at residues Asn53 and Asn68.

Belongs to the secretoglobin family. Lipophilin subfamily. Mammary gland specific. Over-expressed in breast cancer.

It localises to the secreted. This is Mammaglobin-A (SCGB2A2) from Homo sapiens (Human).